A 524-amino-acid polypeptide reads, in one-letter code: Bifunctional purine biosynthesis protein PurH (524 aa).

The 144-residue stretch at Met-1 to Val-144 folds into the MGS-like domain.

It belongs to the PurH family.

It catalyses the reaction (6R)-10-formyltetrahydrofolate + 5-amino-1-(5-phospho-beta-D-ribosyl)imidazole-4-carboxamide = 5-formamido-1-(5-phospho-D-ribosyl)imidazole-4-carboxamide + (6S)-5,6,7,8-tetrahydrofolate. The catalysed reaction is IMP + H2O = 5-formamido-1-(5-phospho-D-ribosyl)imidazole-4-carboxamide. It participates in purine metabolism; IMP biosynthesis via de novo pathway; 5-formamido-1-(5-phospho-D-ribosyl)imidazole-4-carboxamide from 5-amino-1-(5-phospho-D-ribosyl)imidazole-4-carboxamide (10-formyl THF route): step 1/1. It functions in the pathway purine metabolism; IMP biosynthesis via de novo pathway; IMP from 5-formamido-1-(5-phospho-D-ribosyl)imidazole-4-carboxamide: step 1/1. This is Bifunctional purine biosynthesis protein PurH from Anaeromyxobacter sp. (strain K).